The sequence spans 375 residues: N-acetylneuraminate epimerase (375 aa).

Positions 1–22 (MKLTKTALCTALFATFTFSANA) are cleaved as a signal peptide. Kelch repeat units lie at residues 43–87 (TVYV…AAVD), 89–140 (KLYV…ASHG), 142–176 (KVYI…EIAA), 177–222 (AYFD…TIQG), 225–273 (LVVV…LAGA), 295–344 (KQYK…SYNN), and 346–375 (VLLI…LTIE). The active-site Proton acceptor is Glu-231.

The protein belongs to the NanM family. As to quaternary structure, homodimer.

The protein localises to the periplasm. The enzyme catalyses N-acetyl-alpha-neuraminate = N-acetyl-beta-neuraminate. Functionally, converts alpha-N-acetylneuranimic acid (Neu5Ac) to the beta-anomer, accelerating the equilibrium between the alpha- and beta-anomers. Probably facilitates sialidase-negative bacteria to compete successfully for limited amounts of extracellular Neu5Ac, which is likely taken up in the beta-anomer. In addition, the rapid removal of sialic acid from solution might be advantageous to the bacterium to damp down host responses. This is N-acetylneuraminate epimerase from Haemophilus influenzae (strain PittEE).